A 105-amino-acid polypeptide reads, in one-letter code: MSVAAVFRGLRPSPELLLLGLLFLPAVVAVTSAGPEESDGDLSCVCVKTISSGIHLKHITSLEVIKAGRHCAVPQLIATLKNGRKICLDRQAPLYKKVIKKILES.

A signal peptide spans 1–29; sequence MSVAAVFRGLRPSPELLLLGLLFLPAVVA. A glycan (O-linked (GalNAc...) threonine) is linked at T31. 2 disulfides stabilise this stretch: C44-C71 and C46-C87. S61 is subject to Phosphoserine. Heparin is bound at residue 96–102; that stretch reads KKVIKKI.

This sequence belongs to the intercrine alpha (chemokine CxC) family. In terms of assembly, homotetramer. Interacts with TNFAIP6 (via Link domain). Interacts with CCR1. Interacts with CXCR3. Interacts with THBD; this interaction enhances generation of activated protein C.

The protein resides in the secreted. Its function is as follows. Chemokine released during platelet aggregation that plays a role in different biological processes including hematopoiesis, cell proliferation, differentiation, and activation. Acts via different functional receptors including CCR1, CXCR3A or CXCR3B. Upon interaction with CXCR3A receptor, induces activated T-lymphocytes migration mediated via downstream Ras/extracellular signal-regulated kinase (ERK) signaling. Neutralizes the anticoagulant effect of heparin by binding more strongly to heparin than to the chondroitin-4-sulfate chains of the carrier molecule. Plays a role in the inhibition of hematopoiesis and in the maintenance of hematopoietic stem cell (HSC) quiescence. Chemotactic for neutrophils and monocytes via CCR1. Inhibits endothelial cell proliferation. In cooperation with toll-like receptor 8/TLR8, induces chromatin remodeling and activates inflammatory gene expression via the TBK1-IRF5 axis. In addition, induces myofibroblast differentiation and collagen synthesis in different precursor cells, including endothelial cells, by stimulating endothelial-to-mesenchymal transition. Interacts with thrombomodulin/THBD to enhance the activation of protein C and thus potentiates its anticoagulant activity. The sequence is that of Platelet factor 4 (Pf4) from Mus musculus (Mouse).